We begin with the raw amino-acid sequence, 272 residues long: Ribosomal RNA large subunit methyltransferase E (272 aa).

S-adenosyl-L-methionine contacts are provided by Gly50, Trp52, Asp68, Asp84, and Asp109. Lys149 (proton acceptor) is an active-site residue. One can recognise a TRAM domain in the interval 196–254 (PLRRGDKFVVDIEKLGSGGDGAVLIEGFVVFVKEVEVGEKVRIKIADVKPNFAFADVEE).

The protein belongs to the class I-like SAM-binding methyltransferase superfamily. RNA methyltransferase RlmE family.

It is found in the cytoplasm. It catalyses the reaction uridine(2552) in 23S rRNA + S-adenosyl-L-methionine = 2'-O-methyluridine(2552) in 23S rRNA + S-adenosyl-L-homocysteine + H(+). Its function is as follows. Specifically methylates the uridine in position 2552 of 23S rRNA at the 2'-O position of the ribose in the fully assembled 50S ribosomal subunit. The sequence is that of Ribosomal RNA large subunit methyltransferase E from Methanosarcina acetivorans (strain ATCC 35395 / DSM 2834 / JCM 12185 / C2A).